An 83-amino-acid polypeptide reads, in one-letter code: Small ribosomal subunit protein uS17 (83 aa).

The protein belongs to the universal ribosomal protein uS17 family. In terms of assembly, part of the 30S ribosomal subunit.

Functionally, one of the primary rRNA binding proteins, it binds specifically to the 5'-end of 16S ribosomal RNA. This chain is Small ribosomal subunit protein uS17, found in Nitratiruptor sp. (strain SB155-2).